We begin with the raw amino-acid sequence, 479 residues long: Probable cytosol aminopeptidase (479 aa).

Mn(2+)-binding residues include Lys-251 and Asp-256. Residue Lys-263 is part of the active site. 3 residues coordinate Mn(2+): Asp-274, Asp-333, and Glu-335. Arg-337 is an active-site residue.

Belongs to the peptidase M17 family. Mn(2+) is required as a cofactor.

The protein resides in the cytoplasm. It carries out the reaction Release of an N-terminal amino acid, Xaa-|-Yaa-, in which Xaa is preferably Leu, but may be other amino acids including Pro although not Arg or Lys, and Yaa may be Pro. Amino acid amides and methyl esters are also readily hydrolyzed, but rates on arylamides are exceedingly low.. It catalyses the reaction Release of an N-terminal amino acid, preferentially leucine, but not glutamic or aspartic acids.. Its function is as follows. Presumably involved in the processing and regular turnover of intracellular proteins. Catalyzes the removal of unsubstituted N-terminal amino acids from various peptides. This is Probable cytosol aminopeptidase from Albidiferax ferrireducens (strain ATCC BAA-621 / DSM 15236 / T118) (Rhodoferax ferrireducens).